The chain runs to 422 residues: Gamma-glutamyl phosphate reductase (422 aa).

The protein belongs to the gamma-glutamyl phosphate reductase family.

Its subcellular location is the cytoplasm. The enzyme catalyses L-glutamate 5-semialdehyde + phosphate + NADP(+) = L-glutamyl 5-phosphate + NADPH + H(+). Its pathway is amino-acid biosynthesis; L-proline biosynthesis; L-glutamate 5-semialdehyde from L-glutamate: step 2/2. In terms of biological role, catalyzes the NADPH-dependent reduction of L-glutamate 5-phosphate into L-glutamate 5-semialdehyde and phosphate. The product spontaneously undergoes cyclization to form 1-pyrroline-5-carboxylate. The sequence is that of Gamma-glutamyl phosphate reductase from Nitrosomonas europaea (strain ATCC 19718 / CIP 103999 / KCTC 2705 / NBRC 14298).